A 930-amino-acid polypeptide reads, in one-letter code: MAGKARVHELAKELGVTSKEVLARLSEQGEFVKSASSTVEAPVARRLRESYGGSKSDKTKAAPSGNGAAGATVKPSAPQSRPGPKPGPPVAQQPAAPAAPPAAPPAPPTPAAAPPSPAPAAPAAATPAEPAAPSARPGPTPGPRPGPSAPKPGAPKPAARTPRVGNNPFSSQQPVERPAPRPQGPGGPRPGPGAGGPRPGGGPRPGASPGSMPPRPQGARPGGGPRPGGGPRPGGGPRPTPGGAGRPGGGGGGGGNYRGGGAGGGAPAAGGGGFRGRPGGGGGGGRPGQRGGAAGAFGRPGGAPKRGRKSKRAKRAEYENMQAPVVGGVRLPHGNGETIRLARGASLSDFAEKINANPASLVQALFNLGEMVTATQSVGDETLELLGGEMNYVVQVVSPEDEDRELLESFDLTYGEDEGGEEDLEIRPPVVTVMGHVDHGKTRLLDTIRNATVREGEAGGITQHIGAYQVTVDLDGTERPITFIDTPGHEAFTAMRARGAKATDIAILVVAADDGVMPQTVEAINHAQAADVPIVVAVNKIDKEGADPAKIRGQLTEYGLVPEEYGGDAMFVDISAKQGTNIEALLEAVILTADASLDLRANPDMEAQGVAIEAHLDRGRGPVATVLIQRGTLRVGDSVVAGDAYGRVRRMVDEHGEDVEEALPSRPVQVIGFTSVPGAGDNFLVVDEDRIARQIADRRSARKRNALAARTRKRISLEDLDSALKETSQLNLILKGDNSGTVEALEEALLGIQVDDEVELRVIDRGVGGVTETNVNLASASDAIIIGFNVRAEGKATELANREGVEIRYYSIIYQAIDEIESALKGMLKPVYEEKELGRAEIRAIFRSSKVGNIAGCLVQSGIMRRNAKARLLRDNVVVAENLTISSLKREKDDVTEVRDGYECGLTLTYSDIKEGDVIETYELVEKART.

Residues 29–316 are disordered; it reads GEFVKSASST…GRKSKRAKRA (288 aa). The span at 81–120 shows a compositional bias: pro residues; the sequence is RPGPKPGPPVAQQPAAPAAPPAAPPAPPTPAAAPPSPAPA. The segment covering 121-135 has biased composition (low complexity); the sequence is APAAATPAEPAAPSA. Pro residues-rich tracts occupy residues 136-155 and 180-191; these read RPGP…PGAP and PRPQGPGGPRPG. A compositionally biased stretch (gly residues) spans 192-204; sequence PGAGGPRPGGGPR. Residues 228–240 show a composition bias toward pro residues; sequence GGGPRPGGGPRPT. Over residues 241–301 the composition is skewed to gly residues; it reads PGGAGRPGGG…GAAGAFGRPG (61 aa). A compositionally biased stretch (basic residues) spans 305–314; that stretch reads KRGRKSKRAK. The tr-type G domain maps to 426–598; that stretch reads IRPPVVTVMG…VILTADASLD (173 aa). A G1 region spans residues 435–442; the sequence is GHVDHGKT. 435 to 442 serves as a coordination point for GTP; the sequence is GHVDHGKT. The segment at 460–464 is G2; that stretch reads GITQH. The interval 485-488 is G3; it reads DTPG. GTP-binding positions include 485 to 489 and 539 to 542; these read DTPGH and NKID. The G4 stretch occupies residues 539 to 542; sequence NKID. The G5 stretch occupies residues 575–577; it reads SAK.

Belongs to the TRAFAC class translation factor GTPase superfamily. Classic translation factor GTPase family. IF-2 subfamily.

The protein localises to the cytoplasm. Functionally, one of the essential components for the initiation of protein synthesis. Protects formylmethionyl-tRNA from spontaneous hydrolysis and promotes its binding to the 30S ribosomal subunits. Also involved in the hydrolysis of GTP during the formation of the 70S ribosomal complex. In Mycolicibacterium vanbaalenii (strain DSM 7251 / JCM 13017 / BCRC 16820 / KCTC 9966 / NRRL B-24157 / PYR-1) (Mycobacterium vanbaalenii), this protein is Translation initiation factor IF-2.